Consider the following 366-residue polypeptide: Carbamoyl phosphate synthase small chain (366 aa).

The CPSase stretch occupies residues 1-170; it reads MLKKRYLVLE…TKSPYVSTGY (170 aa). L-glutamine is bound by residues Ser-47, Gly-221, and Gly-223. A Glutamine amidotransferase type-1 domain is found at 173-360; the sequence is SVVLVDFGKK…IDMINEYKTK (188 aa). Cys-248 functions as the Nucleophile in the catalytic mechanism. Leu-249, Gln-252, Asn-290, Gly-292, and Tyr-293 together coordinate L-glutamine. Catalysis depends on residues His-333 and Glu-335.

The protein belongs to the CarA family. In terms of assembly, composed of two chains; the small (or glutamine) chain promotes the hydrolysis of glutamine to ammonia, which is used by the large (or ammonia) chain to synthesize carbamoyl phosphate. Tetramer of heterodimers (alpha,beta)4.

It carries out the reaction hydrogencarbonate + L-glutamine + 2 ATP + H2O = carbamoyl phosphate + L-glutamate + 2 ADP + phosphate + 2 H(+). The enzyme catalyses L-glutamine + H2O = L-glutamate + NH4(+). It functions in the pathway amino-acid biosynthesis; L-arginine biosynthesis; carbamoyl phosphate from bicarbonate: step 1/1. It participates in pyrimidine metabolism; UMP biosynthesis via de novo pathway; (S)-dihydroorotate from bicarbonate: step 1/3. Its function is as follows. Small subunit of the glutamine-dependent carbamoyl phosphate synthetase (CPSase). CPSase catalyzes the formation of carbamoyl phosphate from the ammonia moiety of glutamine, carbonate, and phosphate donated by ATP, constituting the first step of 2 biosynthetic pathways, one leading to arginine and/or urea and the other to pyrimidine nucleotides. The small subunit (glutamine amidotransferase) binds and cleaves glutamine to supply the large subunit with the substrate ammonia. This Staphylococcus saprophyticus subsp. saprophyticus (strain ATCC 15305 / DSM 20229 / NCIMB 8711 / NCTC 7292 / S-41) protein is Carbamoyl phosphate synthase small chain.